Reading from the N-terminus, the 317-residue chain is Ferrochelatase (317 aa).

Fe cation-binding residues include histidine 192 and glutamate 271.

This sequence belongs to the ferrochelatase family.

It localises to the cytoplasm. The enzyme catalyses heme b + 2 H(+) = protoporphyrin IX + Fe(2+). Its pathway is porphyrin-containing compound metabolism; protoheme biosynthesis; protoheme from protoporphyrin-IX: step 1/1. Its function is as follows. Catalyzes the ferrous insertion into protoporphyrin IX. The polypeptide is Ferrochelatase (Geobacter metallireducens (strain ATCC 53774 / DSM 7210 / GS-15)).